Consider the following 1116-residue polypeptide: Error-prone DNA polymerase (1116 aa).

Belongs to the DNA polymerase type-C family. DnaE2 subfamily.

Its subcellular location is the cytoplasm. The catalysed reaction is DNA(n) + a 2'-deoxyribonucleoside 5'-triphosphate = DNA(n+1) + diphosphate. Its function is as follows. DNA polymerase involved in damage-induced mutagenesis and translesion synthesis (TLS). It is not the major replicative DNA polymerase. In Sinorhizobium medicae (strain WSM419) (Ensifer medicae), this protein is Error-prone DNA polymerase.